Consider the following 65-residue polypeptide: Large ribosomal subunit protein bL32 (65 aa).

It belongs to the bacterial ribosomal protein bL32 family.

In Tropheryma whipplei (strain TW08/27) (Whipple's bacillus), this protein is Large ribosomal subunit protein bL32.